Reading from the N-terminus, the 243-residue chain is Asnovolin H synthase nvfL (243 aa).

7 helical membrane-spanning segments follow: residues 20–42 (ANTL…AYYS), 51–71 (ALIP…IHCP), 75–95 (FVRI…YAAI), 112–132 (LPFI…ALAA), 138–160 (IAFV…SQLL), 169–189 (SYVV…MVTI), and 205–225 (LLLW…FCFY).

The protein belongs to the paxB family.

Its subcellular location is the membrane. It carries out the reaction (3R)-[(10S)-11-epoxyfarnesyl]-2,3,5-trimethyl-6-oxido-4-oxocyclohexa-1,5-diene-1-carboxylate + H(+) = asnovolin H. It functions in the pathway secondary metabolite biosynthesis; terpenoid biosynthesis. Terpene cyclase; part of the gene cluster that mediates the biosynthesis of novofumigatonin, a heavily oxygenated meroterpenoid containing a unique orthoester moiety. The first step of the pathway is the synthesis of 3,5-dimethylorsellinic acid (DMOA) by the polyketide synthase nvfA via condensation of one acetyl-CoA starter unit with 3 malonyl-CoA units and 2 methylations. DMOA is then converted to farnesyl-DMOA by the farnesyltransferase nvfB. Epoxydation by FAD-dependent monooxygenase nvfK, followed by a protonation-initiated cyclization catalyzed by the terpene cyclase nvfL leads to the production of asnavolin H. The short chain dehydrogenase nvfC then as a 3-OH dehydrogenase of asnovolin H to yield chemesin D. There are two branches to synthesize asnovolin A from chemesin D. In one branch, chemesin D undergoes Baeyer-Villiger oxidation by nvfH, methylation by nvfJ, and enoyl reduction by the nvfM D enoylreductase that reduces the double bond between C-5'and C-6', to form respectively asnovolin I, asnovolin K, and asnovolin A. In the other branch, the methylation precedes the Baeyer-Villiger oxidation and the enoyl reduction to yield asnovolin A via the asnovolin J intermediate. Asnovolin A is further converted to fumigatonoid A by the Fe(II)/2-oxoglutarate-dependent dioxygenase nvfI that catalyzes an endoperoxidation reaction. The alpha/beta hydrolase nvfD then acts as an epimerase that converts fumigatonoid A to its C-5' epimer, which then undergoes spontaneous or nvfD-catalyzed lactonization. The following step utilizes the ketoreductase nvfG to produce fumigatonoid B. The dioxygenase nvfE further converts fumigatonoid B into fumigatonoid C. Finally the Fe(II)/2-oxoglutarate-dependent dioxygenase nvfF catalyzes two rounds of oxidation to transform fumigatonoid C into the end product, novofumigatonin A. This Aspergillus novofumigatus (strain IBT 16806) protein is Asnovolin H synthase nvfL.